The following is a 570-amino-acid chain: Putative ABC transporter ATP-binding protein SAV2684 (570 aa).

ABC transporter domains are found at residues 6 to 247 (ISFK…GIRE) and 304 to 537 (LELN…ASLR). ATP-binding positions include 40 to 47 (GASGSGKS) and 338 to 345 (GHNGAGKS).

Belongs to the ABC transporter superfamily.

The protein resides in the cell membrane. Its function is as follows. Probably part of an ABC transporter complex. Responsible for energy coupling to the transport system. The polypeptide is Putative ABC transporter ATP-binding protein SAV2684 (Staphylococcus aureus (strain Mu50 / ATCC 700699)).